The primary structure comprises 496 residues: Angiopoietin-2 (496 aa).

The first 18 residues, 1–18, serve as a signal peptide directing secretion; the sequence is MWQIIFLTFGWDLVLASA. 6 N-linked (GlcNAc...) asparagine glycosylation sites follow: asparagine 89, asparagine 119, asparagine 133, asparagine 151, asparagine 240, and asparagine 304. A coiled-coil region spans residues 159–256; the sequence is QLLQHSISTN…QQHDLMETVN (98 aa). Residues 275–495 enclose the Fibrinogen C-terminal domain; that stretch reads KEEQTTFRDC…ATTMMIRPAD (221 aa). Residues cysteine 284 and cysteine 313 are joined by a disulfide bond. Ca(2+) is bound by residues aspartate 429, aspartate 431, cysteine 433, and cysteine 435. 2 disulfide bridges follow: cysteine 433–cysteine 435 and cysteine 437–cysteine 450.

Interacts with TEK/TIE2, competing for the same binding site as ANGPT1. Interacts with ITGA5. Interacts with SVEP1/polydom. Interacts with THBD; this interaction significantly inhibits the generation of activated PC and TAFIa/CPB2 by the thrombin/thrombomodulin complex. Expressed in the ovary, uterus and placenta.

The protein localises to the secreted. Binds to TEK/TIE2, competing for the ANGPT1 binding site, and modulating ANGPT1 signaling. Can induce tyrosine phosphorylation of TEK/TIE2 in the absence of ANGPT1. In the absence of angiogenic inducers, such as VEGF, ANGPT2-mediated loosening of cell-matrix contacts may induce endothelial cell apoptosis with consequent vascular regression. In concert with VEGF, it may facilitate endothelial cell migration and proliferation, thus serving as a permissive angiogenic signal. Involved in the regulation of lymphangiogenesis. The chain is Angiopoietin-2 (Angpt2) from Mus musculus (Mouse).